Here is a 271-residue protein sequence, read N- to C-terminus: Phosphatidylglycerol--prolipoprotein diacylglyceryl transferase (271 aa).

Helical transmembrane passes span 21 to 41, 60 to 80, 95 to 115, 124 to 144, 177 to 197, 203 to 223, and 236 to 256; these read LAVR…MWLA, LLFA…VIFY, VWTG…AMFW, FFGV…MGRI, QLYE…WFIG, GSVS…VEYV, and FISM…LMMV. Arg143 is an a 1,2-diacyl-sn-glycero-3-phospho-(1'-sn-glycerol) binding site.

This sequence belongs to the Lgt family.

It is found in the cell inner membrane. It catalyses the reaction L-cysteinyl-[prolipoprotein] + a 1,2-diacyl-sn-glycero-3-phospho-(1'-sn-glycerol) = an S-1,2-diacyl-sn-glyceryl-L-cysteinyl-[prolipoprotein] + sn-glycerol 1-phosphate + H(+). Its pathway is protein modification; lipoprotein biosynthesis (diacylglyceryl transfer). Its function is as follows. Catalyzes the transfer of the diacylglyceryl group from phosphatidylglycerol to the sulfhydryl group of the N-terminal cysteine of a prolipoprotein, the first step in the formation of mature lipoproteins. In Vibrio cholerae serotype O1 (strain ATCC 39541 / Classical Ogawa 395 / O395), this protein is Phosphatidylglycerol--prolipoprotein diacylglyceryl transferase.